We begin with the raw amino-acid sequence, 291 residues long: 4-hydroxy-tetrahydrodipicolinate synthase (291 aa).

Threonine 47 is a pyruvate binding site. The Proton donor/acceptor role is filled by tyrosine 134. Lysine 162 functions as the Schiff-base intermediate with substrate in the catalytic mechanism. Isoleucine 205 is a pyruvate binding site.

The protein belongs to the DapA family. Homotetramer; dimer of dimers.

The protein resides in the cytoplasm. The catalysed reaction is L-aspartate 4-semialdehyde + pyruvate = (2S,4S)-4-hydroxy-2,3,4,5-tetrahydrodipicolinate + H2O + H(+). The protein operates within amino-acid biosynthesis; L-lysine biosynthesis via DAP pathway; (S)-tetrahydrodipicolinate from L-aspartate: step 3/4. Its function is as follows. Catalyzes the condensation of (S)-aspartate-beta-semialdehyde [(S)-ASA] and pyruvate to 4-hydroxy-tetrahydrodipicolinate (HTPA). This is 4-hydroxy-tetrahydrodipicolinate synthase from Methanoculleus marisnigri (strain ATCC 35101 / DSM 1498 / JR1).